The primary structure comprises 282 residues: MQIVRNIDDLRQEVAKLRISGAPVALVPTMGALHRGHVALVDAARSRGCEVVVSIFVNPTQFGPSEDLDAYPRREAADAAMLDGAGATLLWAPDVATMYPPGFATSISVGGVSERWDGAARPGHFAGVATVVTKLFQQVKPDIAFFGEKDFQQLAVIRRFVADLDIDIEIVGVPTQRDDDGLALSSRNAYLSPEERVTARTLPRALGEAAAAIGRGGDVAAALAAAIARLAEAGFDPIDYVALVDAASLEPIDRLDGPARLIAAARLGGTRLIDNLAVEPAP.

30–37 is an ATP binding site; the sequence is MGALHRGH. Histidine 37 functions as the Proton donor in the catalytic mechanism. Glutamine 61 serves as a coordination point for (R)-pantoate. Residue glutamine 61 participates in beta-alanine binding. Residue 147–150 coordinates ATP; sequence GEKD. Residue glutamine 153 participates in (R)-pantoate binding. 184–187 provides a ligand contact to ATP; it reads LSSR.

Belongs to the pantothenate synthetase family. Homodimer.

The protein localises to the cytoplasm. The enzyme catalyses (R)-pantoate + beta-alanine + ATP = (R)-pantothenate + AMP + diphosphate + H(+). The protein operates within cofactor biosynthesis; (R)-pantothenate biosynthesis; (R)-pantothenate from (R)-pantoate and beta-alanine: step 1/1. Functionally, catalyzes the condensation of pantoate with beta-alanine in an ATP-dependent reaction via a pantoyl-adenylate intermediate. The polypeptide is Pantothenate synthetase (Rhizorhabdus wittichii (strain DSM 6014 / CCUG 31198 / JCM 15750 / NBRC 105917 / EY 4224 / RW1) (Sphingomonas wittichii)).